Here is a 449-residue protein sequence, read N- to C-terminus: tRNA-2-methylthio-N(6)-dimethylallyladenosine synthase (449 aa).

Residues 4–119 (RTFHIETFGC…APQALDRLVE (116 aa)) form the MTTase N-terminal domain. The [4Fe-4S] cluster site is built by cysteine 13, cysteine 48, cysteine 82, cysteine 158, cysteine 162, and cysteine 165. A Radical SAM core domain is found at 144 to 375 (GAVPASVFVN…QTLQNRLTER (232 aa)). The 69-residue stretch at 378-446 (QDMVGRKVEV…KHSLLAEQAG (69 aa)) folds into the TRAM domain.

The protein belongs to the methylthiotransferase family. MiaB subfamily. As to quaternary structure, monomer. [4Fe-4S] cluster is required as a cofactor.

The protein localises to the cytoplasm. It carries out the reaction N(6)-dimethylallyladenosine(37) in tRNA + (sulfur carrier)-SH + AH2 + 2 S-adenosyl-L-methionine = 2-methylsulfanyl-N(6)-dimethylallyladenosine(37) in tRNA + (sulfur carrier)-H + 5'-deoxyadenosine + L-methionine + A + S-adenosyl-L-homocysteine + 2 H(+). Catalyzes the methylthiolation of N6-(dimethylallyl)adenosine (i(6)A), leading to the formation of 2-methylthio-N6-(dimethylallyl)adenosine (ms(2)i(6)A) at position 37 in tRNAs that read codons beginning with uridine. This Nitratidesulfovibrio vulgaris (strain ATCC 29579 / DSM 644 / CCUG 34227 / NCIMB 8303 / VKM B-1760 / Hildenborough) (Desulfovibrio vulgaris) protein is tRNA-2-methylthio-N(6)-dimethylallyladenosine synthase.